The following is a 249-amino-acid chain: Diaminopimelate epimerase (249 aa).

Asparagine 11 and asparagine 60 together coordinate substrate. Residue cysteine 69 is the Proton donor of the active site. Substrate contacts are provided by residues 70 to 71 (GN), asparagine 164, and 182 to 183 (ER). The active-site Proton acceptor is the cysteine 192. Residue 193 to 194 (GT) participates in substrate binding.

The protein belongs to the diaminopimelate epimerase family. Homodimer.

It is found in the cytoplasm. The catalysed reaction is (2S,6S)-2,6-diaminopimelate = meso-2,6-diaminopimelate. Its pathway is amino-acid biosynthesis; L-lysine biosynthesis via DAP pathway; DL-2,6-diaminopimelate from LL-2,6-diaminopimelate: step 1/1. Catalyzes the stereoinversion of LL-2,6-diaminopimelate (L,L-DAP) to meso-diaminopimelate (meso-DAP), a precursor of L-lysine and an essential component of the bacterial peptidoglycan. The protein is Diaminopimelate epimerase of Campylobacter jejuni subsp. doylei (strain ATCC BAA-1458 / RM4099 / 269.97).